The chain runs to 824 residues: Leucine--tRNA ligase (824 aa).

The 'HIGH' region signature appears at 40–50 (PYPSGKIHMGH). The 'KMSKS' region signature appears at 580–584 (KMSKS). Residue lysine 583 participates in ATP binding.

Belongs to the class-I aminoacyl-tRNA synthetase family.

The protein localises to the cytoplasm. The catalysed reaction is tRNA(Leu) + L-leucine + ATP = L-leucyl-tRNA(Leu) + AMP + diphosphate. The protein is Leucine--tRNA ligase of Alkaliphilus metalliredigens (strain QYMF).